A 567-amino-acid chain; its full sequence is Ribulokinase (567 aa).

This sequence belongs to the ribulokinase family.

The enzyme catalyses D-ribulose + ATP = D-ribulose 5-phosphate + ADP + H(+). It catalyses the reaction L-ribulose + ATP = L-ribulose 5-phosphate + ADP + H(+). It participates in carbohydrate degradation; L-arabinose degradation via L-ribulose; D-xylulose 5-phosphate from L-arabinose (bacterial route): step 2/3. This Vibrio parahaemolyticus serotype O3:K6 (strain RIMD 2210633) protein is Ribulokinase.